The following is a 547-amino-acid chain: Putative cysteine ligase BshC (547 aa).

The stretch at 461–504 (ASTEATRSAIMDEMEALKQKVVRAEKRQQDEVRAQLKKAHTNLR) forms a coiled coil.

Belongs to the BshC family.

This is Putative cysteine ligase BshC from Salinibacter ruber (strain DSM 13855 / M31).